The following is a 418-amino-acid chain: Serine protease inhibitor A3K (418 aa).

The N-terminal stretch at 1–21 is a signal peptide; that stretch reads MAFIVAMGMILMAGICPAVLC. Asn-39, Asn-105, Asn-185, and Asn-270 each carry an N-linked (GlcNAc...) asparagine glycan. Positions 369-394 are RCL; it reads GTEAAAATGVIGGIRKAILPAVHFNR.

Belongs to the serpin family. Expressed in liver and secreted in plasma.

The protein localises to the secreted. In terms of biological role, contrapsin inhibits trypsin-like proteases. This Mus musculus (Mouse) protein is Serine protease inhibitor A3K (Serpina3k).